The primary structure comprises 201 residues: Ribonuclease HII (201 aa).

Residues 12–201 (DLVAGVDEVG…VRELLDASVE (190 aa)) form the RNase H type-2 domain. Aspartate 18, glutamate 19, and aspartate 110 together coordinate a divalent metal cation.

This sequence belongs to the RNase HII family. It depends on Mn(2+) as a cofactor. The cofactor is Mg(2+).

Its subcellular location is the cytoplasm. The enzyme catalyses Endonucleolytic cleavage to 5'-phosphomonoester.. In terms of biological role, endonuclease that specifically degrades the RNA of RNA-DNA hybrids. This Pseudomonas paraeruginosa (strain DSM 24068 / PA7) (Pseudomonas aeruginosa (strain PA7)) protein is Ribonuclease HII.